The sequence spans 542 residues: Chaperonin GroEL 1 (542 aa).

ATP is bound by residues 29 to 32 (TIGP), 86 to 90 (DGTTT), glycine 415, 479 to 481 (NAA), and aspartate 495.

This sequence belongs to the chaperonin (HSP60) family. Forms a cylinder of 14 subunits composed of two heptameric rings stacked back-to-back. Interacts with the co-chaperonin GroES.

Its subcellular location is the cytoplasm. The enzyme catalyses ATP + H2O + a folded polypeptide = ADP + phosphate + an unfolded polypeptide.. In terms of biological role, together with its co-chaperonin GroES, plays an essential role in assisting protein folding. The GroEL-GroES system forms a nano-cage that allows encapsulation of the non-native substrate proteins and provides a physical environment optimized to promote and accelerate protein folding. The sequence is that of Chaperonin GroEL 1 from Streptomyces avermitilis (strain ATCC 31267 / DSM 46492 / JCM 5070 / NBRC 14893 / NCIMB 12804 / NRRL 8165 / MA-4680).